We begin with the raw amino-acid sequence, 156 residues long: Interleukin-36 receptor antagonist protein (156 aa).

Cys-9 and Cys-155 are disulfide-bonded.

Belongs to the IL-1 family. Interacts with cargo receptor TMED10; the interaction mediates the translocation from the cytoplasm into the ERGIC (endoplasmic reticulum-Golgi intermediate compartment) and thereby secretion. Removal of N-terminal methionine is necessary for full antagonistic activity. In terms of tissue distribution, highly abundant in embryonic tissue and tissues containing epithelial cells.

Its subcellular location is the cytoplasm. It is found in the secreted. Inhibits the activity of interleukin-36 (IL36A,IL36B and IL36G) by binding to receptor IL1RL2/IL-36R and preventing its association with the coreceptor IL1RAP for signaling. Part of the IL-36 signaling system that is thought to be present in epithelial barriers and to take part in local inflammatory response; similar to the IL-1 system with which it shares the coreceptor. Proposed to play a role in skin inflammation. May be involved in the innate immune response to fungal pathogens. May activate an anti-inflammatory signaling pathway by recruiting SIGIRR. The sequence is that of Interleukin-36 receptor antagonist protein from Mus musculus (Mouse).